The sequence spans 279 residues: Shikimate dehydrogenase (NADP(+)) (279 aa).

Residues 21-23 (SRS) and Thr-68 each bind shikimate. Lys-72 acts as the Proton acceptor in catalysis. Asp-83 provides a ligand contact to NADP(+). Asn-92 and Asp-107 together coordinate shikimate. NADP(+) is bound by residues 132–136 (GAGGA), 156–161 (NRTVER), and Leu-221. Tyr-223 serves as a coordination point for shikimate. Gly-244 is an NADP(+) binding site.

Belongs to the shikimate dehydrogenase family. In terms of assembly, homodimer.

It carries out the reaction shikimate + NADP(+) = 3-dehydroshikimate + NADPH + H(+). It participates in metabolic intermediate biosynthesis; chorismate biosynthesis; chorismate from D-erythrose 4-phosphate and phosphoenolpyruvate: step 4/7. Functionally, involved in the biosynthesis of the chorismate, which leads to the biosynthesis of aromatic amino acids. Catalyzes the reversible NADPH linked reduction of 3-dehydroshikimate (DHSA) to yield shikimate (SA). The protein is Shikimate dehydrogenase (NADP(+)) of Nitrobacter winogradskyi (strain ATCC 25391 / DSM 10237 / CIP 104748 / NCIMB 11846 / Nb-255).